The sequence spans 107 residues: Iron-binding protein IscA (107 aa).

Fe cation contacts are provided by Cys35, Cys99, and Cys101.

Belongs to the HesB/IscA family. In terms of assembly, homodimer; may form tetramers and higher multimers. The cofactor is Fe cation.

Functionally, is able to transfer iron-sulfur clusters to apo-ferredoxin. Multiple cycles of [2Fe2S] cluster formation and transfer are observed, suggesting that IscA acts catalytically. Recruits intracellular free iron so as to provide iron for the assembly of transient iron-sulfur cluster in IscU in the presence of IscS, L-cysteine and the thioredoxin reductase system TrxA/TrxB. This Serratia proteamaculans (strain 568) protein is Iron-binding protein IscA.